The following is a 179-amino-acid chain: Large ribosomal subunit protein uL5 (179 aa).

This sequence belongs to the universal ribosomal protein uL5 family. In terms of assembly, part of the 50S ribosomal subunit; part of the 5S rRNA/L5/L18/L25 subcomplex. Contacts the 5S rRNA and the P site tRNA. Forms a bridge to the 30S subunit in the 70S ribosome.

This is one of the proteins that bind and probably mediate the attachment of the 5S RNA into the large ribosomal subunit, where it forms part of the central protuberance. In the 70S ribosome it contacts protein S13 of the 30S subunit (bridge B1b), connecting the 2 subunits; this bridge is implicated in subunit movement. Contacts the P site tRNA; the 5S rRNA and some of its associated proteins might help stabilize positioning of ribosome-bound tRNAs. The chain is Large ribosomal subunit protein uL5 from Thermoanaerobacter sp. (strain X514).